The sequence spans 354 residues: AT-hook motif nuclear-localized protein 11 (354 aa).

Disordered stretches follow at residues 1 to 158 and 290 to 354; these read MDRR…MMPS and KREE…LMRG. Composition is skewed to low complexity over residues 46 to 55 and 75 to 96; these read NSISPFGSNP and VDSS…PPSG. Positions 101–109 match the Bipartite nuclear localization signal motif; the sequence is KRKRGRPRK. The a.T hook 1 DNA-binding region spans 101 to 113; the sequence is KRKRGRPRKYGQD. The span at 122–133 shows a compositional bias: low complexity; sequence SPSISNVSPNSN. A DNA-binding region (a.T hook 2) is located at residues 134 to 146; that stretch reads KRGRGRPPGSGKK. One can recognise a PPC domain in the interval 159 to 302; sequence STGMSFTPHV…ETSEDVQDTD (144 aa). Residues 294–303 show a composition bias toward acidic residues; that stretch reads TSEDVQDTDA. Positions 304–327 are enriched in polar residues; sequence LENNNDNTAATSPPVPQQSQNIVQ. A compositionally biased stretch (basic and acidic residues) spans 340–354; that stretch reads MDMHHPHMDIDLMRG.

The protein resides in the nucleus. Transcription factor that specifically binds AT-rich DNA sequences related to the nuclear matrix attachment regions (MARs). The protein is AT-hook motif nuclear-localized protein 11 of Arabidopsis thaliana (Mouse-ear cress).